The following is a 508-amino-acid chain: Aspartic proteinase yapsin-3 (508 aa).

Positions 1 to 20 (MKLQLAAVATLAVLTSPAFG) are cleaved as a signal peptide. Positions 21–47 (RVLPDGKYVKIPFTKKKNGDNGELSKR) are excised as a propeptide. The region spanning 63–394 (YSVELAIGTP…DLDNYEISLA (332 aa)) is the Peptidase A1 domain. N75 carries N-linked (GlcNAc...) asparagine glycosylation. D81 is an active-site residue. N-linked (GlcNAc...) asparagine glycosylation is found at N120, N160, N163, and N275. D288 is an active-site residue. N-linked (GlcNAc...) asparagine glycosylation is found at N309, N328, N367, N422, N445, and N462. Over residues 448–468 (STATTTRSTTTKKTNSTTTAK) the composition is skewed to low complexity. The interval 448–476 (STATTTRSTTTKKTNSTTTAKSTHKSKRA) is disordered. A lipid anchor (GPI-anchor amidated asparagine) is attached at N483. A propeptide spans 484–508 (SASSIRSTLGLLLVPSLLILSVFFS) (removed in mature form).

Belongs to the peptidase A1 family. Can also be processed to start at Phe-54.

It localises to the cell membrane. Cleaves proteins C-terminally to mono- and paired-basic residues. Required for cell wall integrity. The protein is Aspartic proteinase yapsin-3 (YPS3) of Saccharomyces cerevisiae (strain ATCC 204508 / S288c) (Baker's yeast).